The primary structure comprises 143 residues: uncharacterized protein (143 aa).

2 helical membrane-spanning segments follow: residues 20 to 39 (FKYC…WITV) and 113 to 135 (YFSL…ITGL).

Its subcellular location is the membrane. This is an uncharacterized protein from Saccharomyces cerevisiae (strain ATCC 204508 / S288c) (Baker's yeast).